The following is a 276-amino-acid chain: NH(3)-dependent NAD(+) synthetase (276 aa).

43–50 (GISGGVDS) is a binding site for ATP. Residue aspartate 49 coordinates Mg(2+). Arginine 146 is a binding site for deamido-NAD(+). Threonine 166 is a binding site for ATP. Residue glutamate 171 participates in Mg(2+) binding. Deamido-NAD(+) is bound by residues lysine 179 and aspartate 186. ATP-binding residues include lysine 195 and threonine 217. 266–267 (HK) contacts deamido-NAD(+).

This sequence belongs to the NAD synthetase family. As to quaternary structure, homodimer.

It carries out the reaction deamido-NAD(+) + NH4(+) + ATP = AMP + diphosphate + NAD(+) + H(+). It participates in cofactor biosynthesis; NAD(+) biosynthesis; NAD(+) from deamido-NAD(+) (ammonia route): step 1/1. Its function is as follows. Catalyzes the ATP-dependent amidation of deamido-NAD to form NAD. Uses ammonia as a nitrogen source. In Shewanella baltica (strain OS185), this protein is NH(3)-dependent NAD(+) synthetase.